A 283-amino-acid polypeptide reads, in one-letter code: Cyclin-C (283 aa).

Positions 46–144 (NVIQALGEHL…ILECEFYLLE (99 aa)) constitute a Cyclin N-terminal domain. Positions 252–283 (SILSKMPKPKPPPNSDGEQGTNGSQSSGYSQS) are disordered. Polar residues predominate over residues 267–283 (DGEQGTNGSQSSGYSQS).

This sequence belongs to the cyclin family. Cyclin C subfamily. Component of the Mediator complex. The cylin/CDK pair formed by ccnc/cdk8 also associates with the large subunit of RNA polymerase II.

It localises to the nucleus. Component of the Mediator complex, a coactivator involved in regulated gene transcription of nearly all RNA polymerase II-dependent genes. Mediator functions as a bridge to convey information from gene-specific regulatory proteins to the basal RNA polymerase II transcription machinery. Mediator is recruited to promoters by direct interactions with regulatory proteins and serves as a scaffold for the assembly of a functional preinitiation complex with RNA polymerase II and the general transcription factors. Binds to and activates cyclin-dependent kinase cdk8 that phosphorylates the CTD (C-terminal domain) of the large subunit of RNA polymerase II (RNAp II), which may inhibit the formation of a transcription initiation complex. The polypeptide is Cyclin-C (ccnc) (Xenopus laevis (African clawed frog)).